Here is a 299-residue protein sequence, read N- to C-terminus: 4-hydroxybenzoate octaprenyltransferase (299 aa).

8 helical membrane passes run 33-53, 56-76, 107-127, 151-171, 180-200, 214-234, 247-267, and 278-298; these read VGFLLLLWPTWWALWLAAGGV, WWTLCVFTTGIWLTRSAGCVI, LLMFATLMLIAFGLVLTMNQL, LPQVYLGLAFGWGIPMAFAAI, WLLYVANILWTTAYDTWCAMV, AILFADLDLTVQGVLYTLMLF, HTYWISLIAAVALIGYQFIIA, and AFMHNNWVGMTIFAGIALATT.

This sequence belongs to the UbiA prenyltransferase family. Mg(2+) serves as cofactor.

Its subcellular location is the cell inner membrane. It catalyses the reaction all-trans-octaprenyl diphosphate + 4-hydroxybenzoate = 4-hydroxy-3-(all-trans-octaprenyl)benzoate + diphosphate. It participates in cofactor biosynthesis; ubiquinone biosynthesis. In terms of biological role, catalyzes the prenylation of para-hydroxybenzoate (PHB) with an all-trans polyprenyl group. Mediates the second step in the final reaction sequence of ubiquinone-8 (UQ-8) biosynthesis, which is the condensation of the polyisoprenoid side chain with PHB, generating the first membrane-bound Q intermediate 3-octaprenyl-4-hydroxybenzoate. This is 4-hydroxybenzoate octaprenyltransferase from Xylella fastidiosa (strain 9a5c).